A 765-amino-acid chain; its full sequence is FHF complex subunit HOOK interacting protein 2A (765 aa).

Disordered stretches follow at residues 193-236 (TLKG…DHLS) and 532-561 (TDIS…KNDG). Polar residues-rich tracts occupy residues 196 to 208 (GQDS…GQSR) and 535 to 550 (SPEN…SSSP).

The protein belongs to the FHIP family. As to expression, expressed in all tissues tested, highly expressed brain. In terms of tissue distribution, only detected at high levels in testis.

In terms of biological role, required for proper functioning of the nervous system. This is FHF complex subunit HOOK interacting protein 2A from Homo sapiens (Human).